The sequence spans 355 residues: Uroporphyrinogen decarboxylase (355 aa).

Substrate-binding positions include 27–31, D77, Y154, T209, and H327; that span reads RQAGR.

This sequence belongs to the uroporphyrinogen decarboxylase family. In terms of assembly, homodimer.

The protein resides in the cytoplasm. It carries out the reaction uroporphyrinogen III + 4 H(+) = coproporphyrinogen III + 4 CO2. It functions in the pathway porphyrin-containing compound metabolism; protoporphyrin-IX biosynthesis; coproporphyrinogen-III from 5-aminolevulinate: step 4/4. Functionally, catalyzes the decarboxylation of four acetate groups of uroporphyrinogen-III to yield coproporphyrinogen-III. The chain is Uroporphyrinogen decarboxylase from Yersinia enterocolitica serotype O:8 / biotype 1B (strain NCTC 13174 / 8081).